The primary structure comprises 146 residues: MQLNTIKPAEGSKKNRRHVGRGIGSGLGKTAGRGHKGQKSRSGGFHKVGFEGGQMPMYRRLPKRGFVSLTRRHVGQVTLNDLAKINLPEVDLLVLKAHGFAGEQINAVKVIKTGELKIAVTLKGITATAAAKAAIEAAGGKLVELA.

The tract at residues 1 to 51 is disordered; the sequence is MQLNTIKPAEGSKKNRRHVGRGIGSGLGKTAGRGHKGQKSRSGGFHKVGFE. The span at 21–31 shows a compositional bias: gly residues; that stretch reads RGIGSGLGKTA.

Belongs to the universal ribosomal protein uL15 family. Part of the 50S ribosomal subunit.

Functionally, binds to the 23S rRNA. The protein is Large ribosomal subunit protein uL15 of Polynucleobacter necessarius subsp. necessarius (strain STIR1).